The sequence spans 493 residues: Ribonuclease Y (493 aa).

The chain crosses the membrane as a helical span at residues 19-39; the sequence is IFAILFLIIVILNLGLLVFLA. Residues 172 to 241 form the KH domain; that stretch reads SASFTVIESD…LTIRNILIND (70 aa). In terms of domain architecture, HD spans 300–392; that stretch reads VLSHCLETGF…TQIGDKLSAG (93 aa).

Belongs to the RNase Y family.

It localises to the cell membrane. Its function is as follows. Endoribonuclease that initiates mRNA decay. The protein is Ribonuclease Y of Mycoplasma pneumoniae (strain ATCC 29342 / M129 / Subtype 1) (Mycoplasmoides pneumoniae).